A 706-amino-acid chain; its full sequence is Fatty acid oxidation complex subunit alpha (706 aa).

Residues 1 to 188 form an enoyl-CoA hydratase region; sequence MEKTFNLTRR…KMGLVNDVVP (188 aa). Residues 308–706 form a 3-hydroxyacyl-CoA dehydrogenase region; sequence RKVKKAVILG…TMAQENAHFF (399 aa).

It in the N-terminal section; belongs to the enoyl-CoA hydratase/isomerase family. This sequence in the central section; belongs to the 3-hydroxyacyl-CoA dehydrogenase family. As to quaternary structure, heterotetramer of two alpha chains (FadJ) and two beta chains (FadI).

The protein localises to the cytoplasm. It carries out the reaction a (3S)-3-hydroxyacyl-CoA = a (2E)-enoyl-CoA + H2O. The enzyme catalyses a 4-saturated-(3S)-3-hydroxyacyl-CoA = a (3E)-enoyl-CoA + H2O. The catalysed reaction is a (3S)-3-hydroxyacyl-CoA + NAD(+) = a 3-oxoacyl-CoA + NADH + H(+). It catalyses the reaction (3S)-3-hydroxybutanoyl-CoA = (3R)-3-hydroxybutanoyl-CoA. Its pathway is lipid metabolism; fatty acid beta-oxidation. Functionally, catalyzes the formation of a hydroxyacyl-CoA by addition of water on enoyl-CoA. Also exhibits 3-hydroxyacyl-CoA epimerase and 3-hydroxyacyl-CoA dehydrogenase activities. The chain is Fatty acid oxidation complex subunit alpha from Shewanella baltica (strain OS155 / ATCC BAA-1091).